Here is a 400-residue protein sequence, read N- to C-terminus: tRNA-specific 2-thiouridylase MnmA (400 aa).

ATP contacts are provided by residues alanine 19–serine 26 and leucine 45. Cysteine 113 functions as the Nucleophile in the catalytic mechanism. The cysteines at positions 113 and 210 are disulfide-linked. Glycine 137 is an ATP binding site. Positions arginine 160–glutamine 162 are interaction with tRNA. Cysteine 210 functions as the Cysteine persulfide intermediate in the catalytic mechanism.

Belongs to the MnmA/TRMU family.

The protein localises to the cytoplasm. It carries out the reaction S-sulfanyl-L-cysteinyl-[protein] + uridine(34) in tRNA + AH2 + ATP = 2-thiouridine(34) in tRNA + L-cysteinyl-[protein] + A + AMP + diphosphate + H(+). Functionally, catalyzes the 2-thiolation of uridine at the wobble position (U34) of tRNA, leading to the formation of s(2)U34. The protein is tRNA-specific 2-thiouridylase MnmA of Nitrobacter hamburgensis (strain DSM 10229 / NCIMB 13809 / X14).